The sequence spans 53 residues: SYGYBZKSAGVSVPGPMGPSGPRGLPGPPGAPGPZGFZGPPGZPGZPGSSGPM.

The disordered stretch occupies residues 1 to 53 (SYGYBZKSAGVSVPGPMGPSGPRGLPGPPGAPGPZGFZGPPGZPGZPGSSGPM). An Allysine modification is found at lysine 7. The residue at position 8 (serine 8) is a Phosphoserine. Residues 10–23 (GVSVPGPMGPSGPR) are compositionally biased toward low complexity. 4-hydroxyproline occurs at positions 26, 29, 32, 41, 44, and 47. Over residues 34–53 (PZGFZGPPGZPGZPGSSGPM) the composition is skewed to low complexity.

This sequence belongs to the fibrillar collagen family. As to quaternary structure, trimers of one alpha 2(I) and two alpha 1(I) chains. Interacts with MRC2. Interacts with TRAM2. Interacts with MFAP4 in a Ca (2+)-dependent manner. Post-translationally, contains mostly 4-hydroxyproline. Proline residues at the third position of the tripeptide repeating unit (G-X-Y) are hydroxylated in some or all of the chains. Contains 3-hydroxyproline at a few sites. This modification occurs on the first proline residue in the sequence motif Gly-Pro-Hyp, where Hyp is 4-hydroxyproline. In terms of processing, lysine residues at the third position of the tripeptide repeating unit (G-X-Y) are 5-hydroxylated in some or all of the chains. Post-translationally, O-glycosylated on hydroxylated lysine residues. The O-linked glycan consists of a Glc-Gal disaccharide. Forms the fibrils of tendon, ligaments and bones. In bones the fibrils are mineralized with calcium hydroxyapatite.

It localises to the secreted. The protein resides in the extracellular space. It is found in the extracellular matrix. Its function is as follows. Type I collagen is a member of group I collagen (fibrillar forming collagen). The protein is Collagen alpha-1(I) chain (COL1A1) of Oryctolagus cuniculus (Rabbit).